Consider the following 259-residue polypeptide: Isoprenyl transferase (259 aa).

D30 is an active-site residue. D30 lines the Mg(2+) pocket. Residues 31–34 (GNGR), W35, R43, H47, and 75–77 (STE) contribute to the substrate site. Residue N78 is the Proton acceptor of the active site. Residues W79, R81, R198, and 204–206 (RIS) contribute to the substrate site. E217 contributes to the Mg(2+) binding site.

The protein belongs to the UPP synthase family. As to quaternary structure, homodimer. Requires Mg(2+) as cofactor.

Functionally, catalyzes the condensation of isopentenyl diphosphate (IPP) with allylic pyrophosphates generating different type of terpenoids. The chain is Isoprenyl transferase from Caulobacter vibrioides (strain ATCC 19089 / CIP 103742 / CB 15) (Caulobacter crescentus).